We begin with the raw amino-acid sequence, 470 residues long: Meiosis-specific with OB domain-containing protein (470 aa).

The OB DNA-binding region spans 167–272; that stretch reads IINVLAAVRS…EANILLNFIR (106 aa).

It belongs to the MEIOB family. Component of a multiprotein complex with RPA2 and SPATA22. Interacts with SPATA22. Interacts with the complex BRME1:HSF2BP:BRCA2.

The protein localises to the cytoplasm. Its subcellular location is the nucleus. It is found in the chromosome. Single-stranded DNA-binding protein required for homologous recombination in meiosis I. Required for double strand breaks (DSBs) repair and crossover formation and promotion of faithful and complete synapsis. Not required for the initial loading of recombinases but required to maintain a proper number of RAD51 and DMC1 foci after the zygotene stage. May act by ensuring the stabilization of recombinases, which is required for successful homology search and meiotic recombination. Displays Single-stranded DNA 3'-5' exonuclease activity in vitro. This is Meiosis-specific with OB domain-containing protein from Rattus norvegicus (Rat).